Reading from the N-terminus, the 189-residue chain is MFWLLAILAYLLGSLSFAILLSRLTGNPDPRMSGSGNAGATNMLRLAGRKLAILTLLGDLCKGLLPVLIASAMGLSLQDQAWIGVCAVIGHLFPLYFRFRGGKGVATAAGMLLGLYPPAALLAVCAWLLTFYLTRTSSLAALIATPLTLPLLAWQEPAALLPMSTLTLLIVWRHRGNLRDLFAGRERHF.

The next 5 membrane-spanning stretches (helical) occupy residues 1–21 (MFWLLAILAYLLGSLSFAILL), 51–71 (LAILTLLGDLCKGLLPVLIAS), 77–97 (LQDQAWIGVCAVIGHLFPLYF), 111–131 (MLLGLYPPAALLAVCAWLLTF), and 151–171 (LLAWQEPAALLPMSTLTLLIV).

This sequence belongs to the PlsY family. In terms of assembly, probably interacts with PlsX.

Its subcellular location is the cell inner membrane. It carries out the reaction an acyl phosphate + sn-glycerol 3-phosphate = a 1-acyl-sn-glycero-3-phosphate + phosphate. It functions in the pathway lipid metabolism; phospholipid metabolism. Functionally, catalyzes the transfer of an acyl group from acyl-phosphate (acyl-PO(4)) to glycerol-3-phosphate (G3P) to form lysophosphatidic acid (LPA). This enzyme utilizes acyl-phosphate as fatty acyl donor, but not acyl-CoA or acyl-ACP. This Pseudomonas fluorescens (strain Pf0-1) protein is Glycerol-3-phosphate acyltransferase.